The chain runs to 417 residues: Ribonucleoside-diphosphate reductase small chain (417 aa).

Positions 168, 199, and 202 each coordinate Fe cation. Tyr206 is an active-site residue. Fe cation contacts are provided by Glu261, Glu297, and His300.

It belongs to the ribonucleoside diphosphate reductase small chain family. As to quaternary structure, heterotetramer composed of a homodimer of the large subunit (R1) and a homodimer of the small subunit (R2). Larger multisubunit protein complex are also active, composed of (R1)n(R2)n. Fe cation serves as cofactor.

The catalysed reaction is a 2'-deoxyribonucleoside 5'-diphosphate + [thioredoxin]-disulfide + H2O = a ribonucleoside 5'-diphosphate + [thioredoxin]-dithiol. Ribonucleoside-diphosphate reductase holoenzyme provides the precursors necessary for viral DNA synthesis. Allows virus growth in non-dividing cells. Catalyzes the biosynthesis of deoxyribonucleotides from the corresponding ribonucleotides. The sequence is that of Ribonucleoside-diphosphate reductase small chain (RNR2) from Acanthamoeba polyphaga mimivirus (APMV).